Consider the following 270-residue polypeptide: NAD kinase (270 aa).

Asp63 serves as the catalytic Proton acceptor. NAD(+) is bound by residues 63-64 (DG), 131-132 (NE), Lys142, Arg159, Asp161, 172-177 (TAYAMS), Ala196, and Gln230.

It belongs to the NAD kinase family. A divalent metal cation is required as a cofactor.

It is found in the cytoplasm. The catalysed reaction is NAD(+) + ATP = ADP + NADP(+) + H(+). In terms of biological role, involved in the regulation of the intracellular balance of NAD and NADP, and is a key enzyme in the biosynthesis of NADP. Catalyzes specifically the phosphorylation on 2'-hydroxyl of the adenosine moiety of NAD to yield NADP. This chain is NAD kinase, found in Methanoculleus marisnigri (strain ATCC 35101 / DSM 1498 / JR1).